We begin with the raw amino-acid sequence, 195 residues long: Flagellar transcriptional regulator FlhC (195 aa).

Zn(2+) contacts are provided by Cys137, Cys140, Cys157, and Cys160. The disordered stretch occupies residues 165 to 195 (RAGSARRKTTTRKAVAPTHKTTAASRKAVVA).

It belongs to the FlhC family. As to quaternary structure, heterohexamer composed of two FlhC and four FlhD subunits. Each FlhC binds a FlhD dimer, forming a heterotrimer, and a hexamer assembles by dimerization of two heterotrimers. Requires Zn(2+) as cofactor.

It is found in the cytoplasm. Functionally, functions in complex with FlhD as a master transcriptional regulator that regulates transcription of several flagellar and non-flagellar operons by binding to their promoter region. Activates expression of class 2 flagellar genes, including fliA, which is a flagellum-specific sigma factor that turns on the class 3 genes. Also regulates genes whose products function in a variety of physiological pathways. In Thauera aminoaromatica, this protein is Flagellar transcriptional regulator FlhC.